The primary structure comprises 317 residues: Putative HTH-type transcriptional regulatory protein NP_1320A (317 aa).

The region spanning 132-189 (LSDIRSQEDMSLGKLANELGVSRRTVSKYEDGMSASVEVAAELEEIFDRKLASPVEVL) is the HTH cro/C1-type domain. A DNA-binding region (H-T-H motif) is located at residues 143 to 162 (LGKLANELGVSRRTVSKYED).

This chain is Putative HTH-type transcriptional regulatory protein NP_1320A, found in Natronomonas pharaonis (strain ATCC 35678 / DSM 2160 / CIP 103997 / JCM 8858 / NBRC 14720 / NCIMB 2260 / Gabara) (Halobacterium pharaonis).